The chain runs to 227 residues: MRWAIVRFPGANCDEDARFALEKAGIRAEFVWHTERDLRGFDGVFLPGGFSYGDYLRAGALAAKSPVMEAVRRFAEEGRYVVGVCNGFQILTEAGLLPGALLANLNLHFTCKEVGVRVERNDLPFTRLYPRGQVLRLPIAHGEGRYYADPETLARLEGEGLVVFRYAPLKDEADYNPNGSLHDIAGIVSEKGNVLGMMPHPERAVDEVLGNTDGLPFFLGLVREVAR.

In terms of domain architecture, Glutamine amidotransferase type-1 spans Arg-2–Arg-227. The Nucleophile role is filled by Cys-85. Catalysis depends on residues His-200 and Glu-202.

As to quaternary structure, part of the FGAM synthase complex composed of 1 PurL, 1 PurQ and 2 PurS subunits.

The protein resides in the cytoplasm. The enzyme catalyses N(2)-formyl-N(1)-(5-phospho-beta-D-ribosyl)glycinamide + L-glutamine + ATP + H2O = 2-formamido-N(1)-(5-O-phospho-beta-D-ribosyl)acetamidine + L-glutamate + ADP + phosphate + H(+). It catalyses the reaction L-glutamine + H2O = L-glutamate + NH4(+). Its pathway is purine metabolism; IMP biosynthesis via de novo pathway; 5-amino-1-(5-phospho-D-ribosyl)imidazole from N(2)-formyl-N(1)-(5-phospho-D-ribosyl)glycinamide: step 1/2. Its function is as follows. Part of the phosphoribosylformylglycinamidine synthase complex involved in the purines biosynthetic pathway. Catalyzes the ATP-dependent conversion of formylglycinamide ribonucleotide (FGAR) and glutamine to yield formylglycinamidine ribonucleotide (FGAM) and glutamate. The FGAM synthase complex is composed of three subunits. PurQ produces an ammonia molecule by converting glutamine to glutamate. PurL transfers the ammonia molecule to FGAR to form FGAM in an ATP-dependent manner. PurS interacts with PurQ and PurL and is thought to assist in the transfer of the ammonia molecule from PurQ to PurL. This Thermus thermophilus (strain ATCC BAA-163 / DSM 7039 / HB27) protein is Phosphoribosylformylglycinamidine synthase subunit PurQ.